The following is a 234-amino-acid chain: Probable porphobilinogen deaminase (234 aa).

The protein belongs to the HMBS family.

The enzyme catalyses 4 porphobilinogen + H2O = hydroxymethylbilane + 4 NH4(+). Its pathway is porphyrin-containing compound metabolism; protoporphyrin-IX biosynthesis; coproporphyrinogen-III from 5-aminolevulinate: step 2/4. Functionally, tetrapolymerization of the monopyrrole PBG into the hydroxymethylbilane pre-uroporphyrinogen in several discrete steps. This is Probable porphobilinogen deaminase (hemC) from Chlamydia pneumoniae (Chlamydophila pneumoniae).